Reading from the N-terminus, the 397-residue chain is Kappa-carrageenase (397 aa).

A signal peptide spans 1 to 25 (MKPISIVAFPIPAISMLLLSAVSQA). A GH16 domain is found at 26-299 (ASMQPPIAKP…YVRTWVKVGN (274 aa)). Cysteines 98 and 268 form a disulfide. Catalysis depends on Glu-163, which acts as the Nucleophile. Residue Asp-165 is part of the active site. Residue Glu-168 is the Proton donor of the active site. The 72-residue stretch at 316–387 (AVNSVQLSAA…TITVKTKNKG (72 aa)) folds into the BIG2 domain.

This sequence belongs to the glycosyl hydrolase 16 family.

The protein resides in the periplasm. It catalyses the reaction Endohydrolysis of (1-&gt;4)-beta-D-linkages between D-galactose 4-sulfate and 3,6-anhydro-D-galactose in kappa-carrageenans.. This chain is Kappa-carrageenase (cgkA), found in Pseudoalteromonas carrageenovora (Alteromonas carrageenovora).